Consider the following 348-residue polypeptide: MDNVIGLEIIEVVEQAAIASARWMGKGEKDTADHVAVEAMRDRMNKIHMRGRIVIGEGERDDAPMLYIGEELGICTQPDAAQVCNPDELLEIDIAVDPCEGTNLVAYGQNGSMAVLAISEKGGLFAAPDFYMKKLAAPPAAKGKVDINKSATENLQILAQCLDRSIEELVVVVMKRERHNDLIKEIREAGARVALITDGDVSAALSCAFSGTNIHALMGIGAAPEGVISAAAMRALGGHFQGQLIYDPDIVKTGLIGESKESNLARLKEMGISDPDKVYTAEELACGETVLFAACGITPGTLMKGVRFFGGGARTQSLVISTQSKTARFVDTVHMFETPKRPKALQLH.

Mn(2+)-binding residues include Asp33, Glu57, Asp97, and Glu100. Residues 100 to 102 (EGT), Tyr131, 176 to 178 (RER), and 198 to 200 (DGD) contribute to the substrate site. Glu225 lines the Mn(2+) pocket.

The protein belongs to the FBPase class 2 family. As to quaternary structure, homotetramer.

It catalyses the reaction beta-D-fructose 1,6-bisphosphate + H2O = beta-D-fructose 6-phosphate + phosphate. The enzyme catalyses D-sedoheptulose 1,7-bisphosphate + H2O = D-sedoheptulose 7-phosphate + phosphate. It participates in carbohydrate biosynthesis; Calvin cycle. Catalyzes the hydrolysis of fructose 1,6-bisphosphate (Fru 1,6-P2) and sedoheptulose 1,7-bisphosphate (Sed 1,7-P2) to fructose 6-phosphate and sedoheptulose 7-phosphate, respectively. The protein is D-fructose 1,6-bisphosphatase class 2/sedoheptulose 1,7-bisphosphatase 2 of Acaryochloris marina (strain MBIC 11017).